Reading from the N-terminus, the 740-residue chain is E3 ubiquitin-protein ligase DTX3L (740 aa).

At Ala2 the chain carries N-acetylalanine. Ser9 bears the Phosphoserine mark. 3 disordered regions span residues 96–119 (NTRP…MHQH), 195–231 (SEQK…KAEQ), and 524–551 (HETP…SEAS). Polar residues-rich tracts occupy residues 98-111 (RPQI…QAET) and 195-205 (SEQKQQFSPSM). Ser202 is subject to Phosphoserine. Over residues 206-218 (TERKPLSQQERDS) the composition is skewed to basic and acidic residues. Ser221, Ser532, and Ser539 each carry phosphoserine. The RING-type zinc finger occupies 561–600 (CVICMDTISNKKVLPKCKHEFCAPCINKAMSYKPICPTCQ).

Belongs to the Deltex family. In terms of assembly, homodimer and heterodimer. Can heterodimerize with DTX1, enhancing its ubiquitin ligase activity in vitro. Interacts (via N-terminus) with ADP ribosyltransferase PARP9/BAL1 (via PARP catalytic domain) forming a stable complex; the interaction is required to activate PARP9 but is dispensable for DTX3L catalytic activity. Forms a complex with STAT1 and PARP9 independently of IFNB1 or IFNG-mediated STAT1 'Tyr-701' phosphorylation. Found in a complex with PARP9, STAT1 and H2BC9. Found in a complex with E3 ligase ITCH and ESCRT-0 components HGS and STAM. Interacts (via C-terminus) with ITCH; the interaction is increased upon CXCL12 stimulation and inhibits ITCH catalytic activity; the interaction is direct. Interacts with HGS and STAM; the interaction brings together HGS and STAM and promotes their recruitment to early endosomes. As to quaternary structure, (Microbial infection) Interacts with encephalomyocarditis virus (EMCV) C3 protease; the interaction results in C3 protease 'Lys-48'-linked ubiquitination. (Microbial infection) Interacts with human rhinovirus (HRV) C3 protease; the interaction results in C3 protease 'Lys-48'-linked ubiquitination. In terms of processing, autoubiquitinated.

The protein resides in the cytoplasm. Its subcellular location is the nucleus. The protein localises to the early endosome membrane. It localises to the lysosome membrane. The catalysed reaction is S-ubiquitinyl-[E2 ubiquitin-conjugating enzyme]-L-cysteine + [acceptor protein]-L-lysine = [E2 ubiquitin-conjugating enzyme]-L-cysteine + N(6)-ubiquitinyl-[acceptor protein]-L-lysine.. It participates in protein modification; protein ubiquitination. With respect to regulation, binding to PARP9 enhances DTX3L catalytic activity. E3 ubiquitin-protein ligase which, in association with ADP-ribosyltransferase PARP9, plays a role in DNA damage repair and in interferon-mediated antiviral responses. Monoubiquitinates several histones, including histone H2A, H2B, H3 and H4. In response to DNA damage, mediates monoubiquitination of 'Lys-91' of histone H4 (H4K91ub1). The exact role of H4K91ub1 in DNA damage response is still unclear but it may function as a licensing signal for additional histone H4 post-translational modifications such as H4 'Lys-20' methylation (H4K20me). PARP1-dependent PARP9-DTX3L-mediated ubiquitination promotes the rapid and specific recruitment of 53BP1/TP53BP1, UIMC1/RAP80, and BRCA1 to DNA damage sites. By monoubiquitinating histone H2B H2BC9/H2BJ and thereby promoting chromatin remodeling, positively regulates STAT1-dependent interferon-stimulated gene transcription and thus STAT1-mediated control of viral replication. Independently of its catalytic activity, promotes the sorting of chemokine receptor CXCR4 from early endosome to lysosome following CXCL12 stimulation by reducing E3 ligase ITCH activity and thus ITCH-mediated ubiquitination of endosomal sorting complex required for transport ESCRT-0 components HGS and STAM. In addition, required for the recruitment of HGS and STAM to early endosomes. In association with PARP9, plays a role in antiviral responses by mediating 'Lys-48'-linked ubiquitination of encephalomyocarditis virus (EMCV) and human rhinovirus (HRV) C3 proteases and thus promoting their proteasomal-mediated degradation. This is E3 ubiquitin-protein ligase DTX3L (DTX3L) from Homo sapiens (Human).